The primary structure comprises 176 residues: Large ribosomal subunit protein uL16 (176 aa).

Belongs to the universal ribosomal protein uL16 family.

The chain is Large ribosomal subunit protein uL16 from Thermoplasma volcanium (strain ATCC 51530 / DSM 4299 / JCM 9571 / NBRC 15438 / GSS1).